A 339-amino-acid polypeptide reads, in one-letter code: DNA-directed RNA polymerase subunit alpha (339 aa).

An alpha N-terminal domain (alpha-NTD) region spans residues 1-235 (MVIQKNWQEL…DQLQIFVNFE (235 aa)). Residues 251–339 (FNPALLKKVD…DLAKRFEEHY (89 aa)) are alpha C-terminal domain (alpha-CTD).

Belongs to the RNA polymerase alpha chain family. Homodimer. The RNAP catalytic core consists of 2 alpha, 1 beta, 1 beta' and 1 omega subunit. When a sigma factor is associated with the core the holoenzyme is formed, which can initiate transcription.

It catalyses the reaction RNA(n) + a ribonucleoside 5'-triphosphate = RNA(n+1) + diphosphate. Its function is as follows. DNA-dependent RNA polymerase catalyzes the transcription of DNA into RNA using the four ribonucleoside triphosphates as substrates. The polypeptide is DNA-directed RNA polymerase subunit alpha (Methylobacterium sp. (strain 4-46)).